A 291-amino-acid chain; its full sequence is Small ribosomal subunit biogenesis GTPase RsgA 2 (291 aa).

The CP-type G domain occupies 63–221 (ENALVRPPVA…VADTPGFSSI (159 aa)). Residues 112 to 115 (SKMD) and 164 to 172 (GQSGVGKST) each bind GTP. 4 residues coordinate Zn(2+): C245, C250, H252, and C258.

This sequence belongs to the TRAFAC class YlqF/YawG GTPase family. RsgA subfamily. Monomer. Associates with 30S ribosomal subunit, binds 16S rRNA. Zn(2+) is required as a cofactor.

Its subcellular location is the cytoplasm. In terms of biological role, one of several proteins that assist in the late maturation steps of the functional core of the 30S ribosomal subunit. Helps release RbfA from mature subunits. May play a role in the assembly of ribosomal proteins into the subunit. Circularly permuted GTPase that catalyzes slow GTP hydrolysis, GTPase activity is stimulated by the 30S ribosomal subunit. The polypeptide is Small ribosomal subunit biogenesis GTPase RsgA 2 (Listeria monocytogenes serovar 1/2a (strain ATCC BAA-679 / EGD-e)).